A 152-amino-acid polypeptide reads, in one-letter code: Transcriptional regulator MraZ (152 aa).

SpoVT-AbrB domains are found at residues 5–52 (ASAI…PIHE) and 81–124 (AHEC…DEAA).

It belongs to the MraZ family. As to quaternary structure, forms oligomers.

It localises to the cytoplasm. The protein localises to the nucleoid. This Shewanella pealeana (strain ATCC 700345 / ANG-SQ1) protein is Transcriptional regulator MraZ.